We begin with the raw amino-acid sequence, 139 residues long: Putative pre-16S rRNA nuclease (139 aa).

The protein belongs to the YqgF nuclease family.

The protein localises to the cytoplasm. Functionally, could be a nuclease involved in processing of the 5'-end of pre-16S rRNA. In Bacillus licheniformis (strain ATCC 14580 / DSM 13 / JCM 2505 / CCUG 7422 / NBRC 12200 / NCIMB 9375 / NCTC 10341 / NRRL NRS-1264 / Gibson 46), this protein is Putative pre-16S rRNA nuclease.